We begin with the raw amino-acid sequence, 410 residues long: Acetate kinase (410 aa).

Asn-7 contacts Mg(2+). Lys-14 is an ATP binding site. Arg-88 serves as a coordination point for substrate. The Proton donor/acceptor role is filled by Asp-145. ATP is bound by residues His-203–Gly-207, Asp-278–Arg-280, and Gly-326–Asn-330. Residue Glu-379 coordinates Mg(2+).

This sequence belongs to the acetokinase family. In terms of assembly, homodimer. The cofactor is Mg(2+). Requires Mn(2+) as cofactor.

Its subcellular location is the cytoplasm. The enzyme catalyses acetate + ATP = acetyl phosphate + ADP. The protein operates within metabolic intermediate biosynthesis; acetyl-CoA biosynthesis; acetyl-CoA from acetate: step 1/2. Catalyzes the formation of acetyl phosphate from acetate and ATP. Can also catalyze the reverse reaction. This is Acetate kinase from Aster yellows witches'-broom phytoplasma (strain AYWB).